The sequence spans 66 residues: Large ribosomal subunit protein bL33c (66 aa).

It belongs to the bacterial ribosomal protein bL33 family.

Its subcellular location is the plastid. The protein localises to the chloroplast. This chain is Large ribosomal subunit protein bL33c, found in Agrostis stolonifera (Creeping bentgrass).